Consider the following 427-residue polypeptide: 5'-deoxyadenosine deaminase (427 aa).

The Zn(2+) site is built by His-62 and His-64. Residues Glu-91 and His-183 each contribute to the substrate site. Residue His-210 participates in Zn(2+) binding. Positions 213 and 298 each coordinate substrate. Asp-298 is a Zn(2+) binding site.

This sequence belongs to the metallo-dependent hydrolases superfamily. MTA/SAH deaminase family. Homotetramer. Requires Zn(2+) as cofactor.

The catalysed reaction is 5'-deoxyadenosine + H2O + H(+) = 5'-deoxyinosine + NH4(+). It catalyses the reaction S-adenosyl-L-homocysteine + H2O + H(+) = S-inosyl-L-homocysteine + NH4(+). It carries out the reaction S-methyl-5'-thioadenosine + H2O + H(+) = S-methyl-5'-thioinosine + NH4(+). The enzyme catalyses adenosine + H2O + H(+) = inosine + NH4(+). It functions in the pathway amino-acid biosynthesis; S-adenosyl-L-methionine biosynthesis. Its function is as follows. Catalyzes the deamination of three SAM-derived enzymatic products, namely 5'-deoxyadenosine, S-adenosyl-L-homocysteine, and 5'-methylthioadenosine, to produce the inosine analogs. Can also deaminate adenosine. The preferred substrate for this enzyme is 5'-deoxyadenosine, but all these substrates are efficiently deaminated. Likely functions in a S-adenosyl-L-methionine (SAM) recycling pathway from S-adenosyl-L-homocysteine (SAH) produced from SAM-dependent methylation reactions. May also be involved in the recycling of 5'-deoxyadenosine, whereupon the 5'-deoxyribose moiety of 5'-deoxyinosine is further metabolized to deoxyhexoses used for the biosynthesis of aromatic amino acids in methanogens. The sequence is that of 5'-deoxyadenosine deaminase from Methanothermobacter thermautotrophicus (strain ATCC 29096 / DSM 1053 / JCM 10044 / NBRC 100330 / Delta H) (Methanobacterium thermoautotrophicum).